Reading from the N-terminus, the 3341-residue chain is Genome polyprotein (3341 aa).

Composition is skewed to basic and acidic residues over residues 1–14 and 24–35; these read MKRKDLEARGKAPG and REGRRKDKDKGG. The interval 1-57 is disordered; the sequence is MKRKDLEARGKAPGRDSSTPFWGREGRRKDKDKGGESPSNRQVTLKTPIQSGRRAGK. The Cytoplasmic segment spans residues 1-120; sequence MKRKDLEARG…LESRRTTGNP (120 aa). Residues 37 to 50 are compositionally biased toward polar residues; sequence SPSNRQVTLKTPIQ. A hydrophobic; homodimerization of capsid protein C region spans residues 55-97; that stretch reads AGKRQRVGLLGRLGVGWGSFLQEDIVQALIHMALVLHALFASI. Positions 117 to 136 are cleaved as a propeptide — ER anchor for the capsid protein C, removed in mature form by serine protease NS3; that stretch reads TGNPMTLAFILGFLTVLCGC. The helical transmembrane segment at 121 to 141 threads the bilayer; the sequence is MTLAFILGFLTVLCGCVVIDM. The Extracellular segment spans residues 142–245; sequence QVSTTRGTEI…AFKTIRENKT (104 aa). 2 N-linked (GlcNAc...) asparagine; by host glycosylation sites follow: Asn-157 and Asn-243. A helical transmembrane segment spans residues 246–262; that stretch reads IFIVALLCVAIAKRWPT. Residue Trp-263 is a topological domain, cytoplasmic. Residues 264-278 form a helical membrane-spanning segment; that stretch reads VVILLAIGTWTTVKG. The Extracellular segment spans residues 279 to 665; sequence EFVEPLYTLK…GVWQDLVGKF (387 aa). N-linked (GlcNAc...) asparagine; by host glycosylation occurs at Asn-339. The tract at residues 371-384 is involved in fusion; the sequence is NRGWGTGCFKWGIG. Asn-399, Asn-411, Asn-575, and Asn-611 each carry an N-linked (GlcNAc...) asparagine; by host glycan. The chain crosses the membrane as a helical span at residues 666-686; that stretch reads SVGAFFSNTALLVILVLAALI. At 687 to 689 the chain is on the cytoplasmic side; it reads DKR. Residues 690-705 form a helical membrane-spanning segment; the sequence is IAFLLVLGGYFYYVRA. The Extracellular portion of the chain corresponds to 706-1138; it reads DLGCGIDTTR…AKTRTSTLTR (433 aa). Asn-794, Asn-896, Asn-993, and Asn-1027 each carry an N-linked (GlcNAc...) asparagine; by host glycan. The chain crosses the membrane as a helical span at residues 1139 to 1159; it reads LFLTILAMALFGLPNLFSSVG. The Cytoplasmic segment spans residues 1160-1178; the sequence is LSAWVLLVASSSAQPQDLS. The chain crosses the membrane as a helical span at residues 1179-1199; that stretch reads MNLWIVLQTGSSAVLLLGYMI. The Lumenal segment spans residues 1200–1204; the sequence is RRKLA. The helical transmembrane segment at 1205-1225 threads the bilayer; the sequence is MVLGVHHLVTLMCVQFLFSAV. The Cytoplasmic portion of the chain corresponds to 1226–1231; that stretch reads DRYQKY. A helical membrane pass occupies residues 1232–1252; sequence LYGLLELMASVVLLSAYKSVL. Residues 1253–1261 lie on the Lumenal side of the membrane; sequence QALPPEVLC. The helical transmembrane segment at 1262–1282 threads the bilayer; the sequence is FSLVMGWKTALSLATVVFLIF. At 1283–1303 the chain is on the cytoplasmic side; sequence SLNAMYKYACQYHNPRNGYRD. The helical transmembrane segment at 1304–1324 threads the bilayer; sequence SGANLWFWTVSLASAGGIWAA. Topologically, residues 1325–1326 are lumenal; it reads EK. The helical transmembrane segment at 1327–1347 threads the bilayer; the sequence is AHQPTVAAVLAFTMVVLFLYM. Topologically, residues 1348–1403 are cytoplasmic; sequence EQTNVSMELEFISAGETPEGVSTENDDGINIPDLKGRYGEDGIVVGAASSSGYLPE. An intramembrane region (helical) is located at residues 1404 to 1424; sequence LVFVFLLGFAVTSTSYFLGAL. Residues 1425 to 2089 lie on the Cytoplasmic side of the membrane; the sequence is YLLIATSTNL…TERSLTVVMA (665 aa). The Peptidase S7 domain maps to 1452–1630; it reads SDDLLGLGGP…KPTDVTESLN (179 aa). Catalysis depends on charge relay system; for serine protease NS3 activity residues His-1506, Asp-1530, and Ser-1589. Residues 1627 to 1780 enclose the Helicase ATP-binding domain; that stretch reads ESLNCDSTRR…SNYAISDQSI (154 aa). 1640–1647 is a binding site for ATP; sequence WHPGKGKT. Residues 1729–1732 carry the DECH box motif; it reads DECH. Residues 1793 to 1947 enclose the Helicase C-terminal domain; that stretch reads NVQKSVGAKK…TFMLEEAAYS (155 aa). The helical transmembrane segment at 2090–2110 threads the bilayer; that stretch reads FVLGVSIMLSCFIAVWALCFL. Residues 2111-2145 are Lumenal-facing; sequence FSLFRPKKATYEQMPSSDPLSGGVLVSTPSVLYCM. The chain crosses the membrane as a helical span at residues 2146–2166; sequence GVPLGFCVVITLAMFLVYPVL. The Cytoplasmic portion of the chain corresponds to 2167–2178; the sequence is YKSIGNRSYMDS. A helical membrane pass occupies residues 2179–2199; sequence DLVKWVILGSCLICGVLAWEM. Residues 2200–2242 are Lumenal-facing; sequence RMFPNIRSDLMELVKAVKEPEEVVNSGPSFPSWEIAQGKGATM. The chain crosses the membrane as a helical span at residues 2243-2263; the sequence is LDSLQVFFFITVLSTKFLYWF. The Cytoplasmic portion of the chain corresponds to 2264 to 2302; sequence QENWTARMYAMKHPEMVSSIGGFRFDEIPFRAVLPSGFA. An intramembrane region (helical) is located at residues 2303–2323; the sequence is IVAIASLPSVVVGLLAAGVFM. Residues 2324 to 2366 lie on the Cytoplasmic side of the membrane; it reads AIMYCQNKWNATPKILTALDARDQRHDRPTEITSRVPLENTRS. The helical transmembrane segment at 2367 to 2387 threads the bilayer; that stretch reads IMYAFCLIFSLFWAFCTRSPG. Over 2388–2412 the chain is Lumenal; the sequence is DFLRGSLVVGASMWQILHPRSKIHD. Residues 2413–2433 traverse the membrane as a helical segment; that stretch reads VMDFGSMVSAIGLLEMNYLFY. The Cytoplasmic portion of the chain corresponds to 2434–3341; that stretch reads RFMHIAARAL…SRYRRGNDVI (908 aa). An mRNA cap 0-1 NS5-type MT domain is found at 2454–2706; that stretch reads ALEKSTTIGL…SPVLPKGTRA (253 aa). S-adenosyl-L-methionine is bound at residue Ser-2497. Lys-2509 functions as the For 2'-O-MTase activity in the catalytic mechanism. 6 residues coordinate S-adenosyl-L-methionine: Gly-2527, Trp-2528, Thr-2545, Ile-2546, Asp-2572, and Val-2573. Asp-2587 acts as the For 2'-O-MTase activity in catalysis. Ile-2588 is an S-adenosyl-L-methionine binding site. Catalysis depends on for 2'-O-MTase activity residues Lys-2624 and Glu-2660. Tyr-2662 contributes to the S-adenosyl-L-methionine binding site. Zn(2+) is bound by residues Glu-2881, His-2885, Cys-2890, and Cys-2893. A RdRp catalytic domain is found at 2970-3117; that stretch reads KYLIADDIAG…STDNRDFSSA (148 aa). His-3152, Cys-3168, and Cys-3287 together coordinate Zn(2+).

In the N-terminal section; belongs to the class I-like SAM-binding methyltransferase superfamily. mRNA cap 0-1 NS5-type methyltransferase family. Homodimer. In terms of assembly, forms heterodimers with envelope protein E in the endoplasmic reticulum and Golgi. As to quaternary structure, homodimer; in the endoplasmic reticulum and Golgi. Forms homodimers as well as homohexamers. NS1 may interact with NS4A. In terms of assembly, forms a heterodimer with serine protease NS3. May form homooligomers. As to quaternary structure, forms a heterodimer with NS2B. Interacts with NS4B. Interacts with unphosphorylated RNA-directed RNA polymerase NS5; this interaction stimulates RNA-directed RNA polymerase NS5 guanylyltransferase activity. Interacts with serine protease NS3. In terms of assembly, interacts with host STAT2; this interaction inhibits the phosphorylation of the latter, and, when all viral proteins are present (polyprotein), targets STAT2 for degradation. Post-translationally, genome polyprotein: Specific enzymatic cleavages in vivo yield mature proteins. Cleavages in the lumen of endoplasmic reticulum are performed by host signal peptidase, whereas cleavages in the cytoplasmic side are performed by serine protease NS3. Signal cleavage at the 2K-4B site requires a prior NS3 protease-mediated cleavage at the 4A-2K site. In terms of processing, cleaved in post-Golgi vesicles by a host furin, releasing the mature small envelope protein M, and peptide pr. This cleavage is incomplete as up to 30% of viral particles still carry uncleaved prM. N-glycosylated. Post-translationally, N-glycosylated. The excreted form is glycosylated and this is required for efficient secretion of the protein from infected cells. In terms of processing, phosphorylated on serines residues. This phosphorylation may trigger NS5 nuclear localization.

It localises to the virion. It is found in the host nucleus. The protein localises to the secreted. The protein resides in the virion membrane. Its subcellular location is the host endoplasmic reticulum membrane. It catalyses the reaction Selective hydrolysis of -Xaa-Xaa-|-Yaa- bonds in which each of the Xaa can be either Arg or Lys and Yaa can be either Ser or Ala.. The catalysed reaction is RNA(n) + a ribonucleoside 5'-triphosphate = RNA(n+1) + diphosphate. It carries out the reaction a ribonucleoside 5'-triphosphate + H2O = a ribonucleoside 5'-diphosphate + phosphate + H(+). The enzyme catalyses ATP + H2O = ADP + phosphate + H(+). It catalyses the reaction a 5'-end (5'-triphosphoguanosine)-ribonucleoside in mRNA + S-adenosyl-L-methionine = a 5'-end (N(7)-methyl 5'-triphosphoguanosine)-ribonucleoside in mRNA + S-adenosyl-L-homocysteine. The catalysed reaction is a 5'-end (N(7)-methyl 5'-triphosphoguanosine)-ribonucleoside in mRNA + S-adenosyl-L-methionine = a 5'-end (N(7)-methyl 5'-triphosphoguanosine)-(2'-O-methyl-ribonucleoside) in mRNA + S-adenosyl-L-homocysteine + H(+). In terms of biological role, plays a role in virus budding by binding to the cell membrane and gathering the viral RNA into a nucleocapsid that forms the core of a mature virus particle. During virus entry, may induce genome penetration into the host cytoplasm after hemifusion induced by the surface proteins. Can migrate to the cell nucleus where it modulates host functions. Its function is as follows. Prevents premature fusion activity of envelope proteins in trans-Golgi by binding to envelope protein E at pH6.0. After virion release in extracellular space, gets dissociated from E dimers. Functionally, acts as a chaperone for envelope protein E during intracellular virion assembly by masking and inactivating envelope protein E fusion peptide. prM is the only viral peptide matured by host furin in the trans-Golgi network probably to avoid catastrophic activation of the viral fusion activity in acidic Golgi compartment prior to virion release. prM-E cleavage is inefficient, and many virions are only partially matured. These uncleaved prM would play a role in immune evasion. May play a role in virus budding. Exerts cytotoxic effects by activating a mitochondrial apoptotic pathway through M ectodomain. May display a viroporin activity. In terms of biological role, binds to host cell surface receptor and mediates fusion between viral and cellular membranes. Envelope protein is synthesized in the endoplasmic reticulum in the form of heterodimer with protein prM. They play a role in virion budding in the ER, and the newly formed immature particle is covered with 60 spikes composed of heterodimer between precursor prM and envelope protein E. The virion is transported to the Golgi apparatus where the low pH causes dissociation of PrM-E heterodimers and formation of E homodimers. prM-E cleavage is inefficient, and many virions are only partially matured. These uncleaved prM would play a role in immune evasion. Its function is as follows. Involved in immune evasion, pathogenesis and viral replication. Once cleaved off the polyprotein, is targeted to three destinations: the viral replication cycle, the plasma membrane and the extracellular compartment. May play a role in viral genome replication. Assist membrane bending and envelopment of genomic RNA at the endoplasmic reticulum. Excreted as a hexameric lipoparticle that plays a role against host immune response. Functionally, component of the viral RNA replication complex that functions in virion assembly and antagonizes the host immune response. Required cofactor for the serine protease function of NS3. May have membrane-destabilizing activity and form viroporins. In terms of biological role, displays three enzymatic activities: serine protease, NTPase and RNA helicase. NS3 serine protease, in association with NS2B, performs its autocleavage and cleaves the polyprotein at dibasic sites in the cytoplasm: C-prM, NS2A-NS2B, NS2B-NS3, NS3-NS4A, NS4A-2K and NS4B-NS5. NS3 RNA helicase binds RNA and unwinds dsRNA in the 3' to 5' direction. Its function is as follows. Regulates the ATPase activity of the NS3 helicase activity. NS4A allows NS3 helicase to conserve energy during unwinding. Functionally, functions as a signal peptide for NS4B and is required for the interferon antagonism activity of the latter. Inhibits interferon (IFN)-induced host STAT1 phosphorylation and nuclear translocation, thereby preventing the establishment of a cellular antiviral state by blocking the IFN-alpha/beta pathway. In terms of biological role, replicates the viral (+) and (-) RNA genome, and performs the capping of genomes in the cytoplasm. NS5 methylates viral RNA cap at guanine N-7 and ribose 2'-O positions. Besides its role in RNA genome replication, also prevents the establishment of cellular antiviral state by blocking the interferon-alpha/beta (IFN-alpha/beta) signaling pathway. Inhibits host TYK2 and STAT2 phosphorylation, thereby preventing activation of JAK-STAT signaling pathway. The sequence is that of Genome polyprotein from Aedes (CFA flavivirus).